The sequence spans 1488 residues: Putative E3 ubiquitin-protein ligase LIN (1488 aa).

Disordered regions lie at residues 297-330 (GFSM…EQSS), 351-414 (YDAS…PLRR), and 432-500 (IVSD…SSSS). The segment covering 366 to 380 (EPKKNIKDEDVEPKV) has biased composition (basic and acidic residues). The span at 382–411 (RSNQKNQMNSPNISPMESPRRASNYSSTNP) shows a compositional bias: polar residues. Residues 432–444 (IVSDHSLSSSPDT) show a composition bias toward low complexity. Positions 468-486 (SQTPSMNQDNENSLVLNDS) are enriched in polar residues. A U-box domain is found at 512–587 (KPPKDFVCPI…VSWKEQNPEL (76 aa)). WD repeat units follow at residues 1207–1244 (SSNG…PRVI), 1249–1290 (EHKK…DVYD), 1412–1451 (SLST…RVAS), and 1456–1488 (GGNT…WALD).

Expressed in roots and nodules.

It catalyses the reaction S-ubiquitinyl-[E2 ubiquitin-conjugating enzyme]-L-cysteine + [acceptor protein]-L-lysine = [E2 ubiquitin-conjugating enzyme]-L-cysteine + N(6)-ubiquitinyl-[acceptor protein]-L-lysine.. It functions in the pathway protein modification; protein ubiquitination. In terms of biological role, putative E3 ubiquitin ligase involved in the rhizobial infection process. Plays an important role in the early steps of bacterial symbiont thread formation in roots, and in growth, differentiation and maintenance of nodules. This is Putative E3 ubiquitin-protein ligase LIN from Medicago truncatula (Barrel medic).